We begin with the raw amino-acid sequence, 877 residues long: Leucine--tRNA ligase (877 aa).

A 'HIGH' region motif is present at residues 50 to 60 (PYPSGKLHMGH). The 'KMSKS' region signature appears at 634-638 (KMSKS). K637 serves as a coordination point for ATP.

The protein belongs to the class-I aminoacyl-tRNA synthetase family.

It is found in the cytoplasm. It carries out the reaction tRNA(Leu) + L-leucine + ATP = L-leucyl-tRNA(Leu) + AMP + diphosphate. The polypeptide is Leucine--tRNA ligase (Hydrogenovibrio crunogenus (strain DSM 25203 / XCL-2) (Thiomicrospira crunogena)).